The sequence spans 382 residues: Mannitol-1-phosphate 5-dehydrogenase (382 aa).

Residue Ala-3–Gly-14 coordinates NAD(+).

It belongs to the mannitol dehydrogenase family.

The enzyme catalyses D-mannitol 1-phosphate + NAD(+) = beta-D-fructose 6-phosphate + NADH + H(+). This is Mannitol-1-phosphate 5-dehydrogenase from Salmonella typhi.